A 78-amino-acid polypeptide reads, in one-letter code: Putative membrane protein insertion efficiency factor (78 aa).

This sequence belongs to the UPF0161 family.

The protein localises to the cell membrane. Could be involved in insertion of integral membrane proteins into the membrane. This is Putative membrane protein insertion efficiency factor from Bacillus cereus (strain G9842).